Here is an 88-residue protein sequence, read N- to C-terminus: Exodeoxyribonuclease 7 small subunit (88 aa).

Belongs to the XseB family. In terms of assembly, heterooligomer composed of large and small subunits.

The protein localises to the cytoplasm. The catalysed reaction is Exonucleolytic cleavage in either 5'- to 3'- or 3'- to 5'-direction to yield nucleoside 5'-phosphates.. Its function is as follows. Bidirectionally degrades single-stranded DNA into large acid-insoluble oligonucleotides, which are then degraded further into small acid-soluble oligonucleotides. This Bordetella bronchiseptica (strain ATCC BAA-588 / NCTC 13252 / RB50) (Alcaligenes bronchisepticus) protein is Exodeoxyribonuclease 7 small subunit.